Consider the following 390-residue polypeptide: GTPase Obg (390 aa).

The region spanning 1-159 (MKFVDEASIL…RELLLELMLL (159 aa)) is the Obg domain. Positions 127 to 147 (NTRFKSSVNRTPRQKTNGTPG) are disordered. A compositionally biased stretch (polar residues) spans 129-145 (RFKSSVNRTPRQKTNGT). Residues 160–333 (ADVGMLGMPN…LCWDVMTFII (174 aa)) form the OBG-type G domain. GTP-binding positions include 166–173 (GMPNAGKS), 191–195 (FTTLV), 213–216 (DIPG), 283–286 (NKID), and 314–316 (SAA). Positions 173 and 193 each coordinate Mg(2+).

Belongs to the TRAFAC class OBG-HflX-like GTPase superfamily. OBG GTPase family. As to quaternary structure, monomer. Mg(2+) is required as a cofactor.

It is found in the cytoplasm. An essential GTPase which binds GTP, GDP and possibly (p)ppGpp with moderate affinity, with high nucleotide exchange rates and a fairly low GTP hydrolysis rate. Plays a role in control of the cell cycle, stress response, ribosome biogenesis and in those bacteria that undergo differentiation, in morphogenesis control. The polypeptide is GTPase Obg (Escherichia coli (strain K12 / DH10B)).